The following is a 232-amino-acid chain: Ribose-5-phosphate isomerase A (232 aa).

Substrate is bound by residues threonine 31–threonine 34, aspartate 87–aspartate 90, and lysine 100–glycine 103. Glutamate 109 (proton acceptor) is an active-site residue. Lysine 127 is a binding site for substrate.

This sequence belongs to the ribose 5-phosphate isomerase family. Homodimer.

The catalysed reaction is aldehydo-D-ribose 5-phosphate = D-ribulose 5-phosphate. The protein operates within carbohydrate degradation; pentose phosphate pathway; D-ribose 5-phosphate from D-ribulose 5-phosphate (non-oxidative stage): step 1/1. In terms of biological role, catalyzes the reversible conversion of ribose-5-phosphate to ribulose 5-phosphate. The protein is Ribose-5-phosphate isomerase A of Bifidobacterium adolescentis (strain ATCC 15703 / DSM 20083 / NCTC 11814 / E194a).